The primary structure comprises 376 residues: uncharacterized protein (376 aa).

It belongs to the choline/ethanolamine kinase family.

This is an uncharacterized protein from Caenorhabditis elegans.